Consider the following 605-residue polypeptide: MGVRRSLAALLAALLGCATSLVALTVAASPAHAAPSGNRDVIVHLFQWRWKSIADECRTTLGPHGFGAVQVSPPQEHVVLPAEDYPWWQDYQPVSYKLDQTRRGSRADFIDMVNTCREAGVKIYVDAVINHMTGTGSAGAGPGSAGSSYSKYDYPGIYQSQDFNDCRRDITNWNDKWEVQHCELVGLADLKTSSPYVQDRIAAYLNELIDLGVAGFRIDAAKHIPEGDLQAILSRLKNVHPAWGGGKPYIFQEVIADSTISTGSYTHLGSVTEFQYHRDISHAFANGNIAHLTGLGSGLTPSDKAVVFVVNHDTQRYEPILTHTDRARYDLAQKFMLAHPYGTPKVMSSYTWSGDDKAGPPMHSDGTTRPTDCSADRWLCEHRAVAGMVGFHNAVAGQGIGSAVTDGNGRLAFARGSAGYAAFNATNTAWTRTFTTSLPDGVYCDVANGTFVDGVCDGPSYQVSGGKFTATVPANGAVALHVEAPGSCGPDGCGTPPGGGDDCTTVTARFHATVTTWYGQEVAVVGSIPELGSWQPAQGVRLRTDSGTYPVWSGAVDLPAGVGFEYKYVKLNRTAPWSGSRAATASPPWMTSGGGCSQNFYDSWR.

An N-terminal signal peptide occupies residues 1-33 (MGVRRSLAALLAALLGCATSLVALTVAASPAHA). Ca(2+) contacts are provided by Asn-130 and Asp-189. Catalysis depends on Asp-219, which acts as the Nucleophile. A Ca(2+)-binding site is contributed by His-223. Catalysis depends on Glu-253, which acts as the Proton donor. A CBM20 domain is found at 500–605 (GDDCTTVTAR…CSQNFYDSWR (106 aa)).

The protein belongs to the glycosyl hydrolase 13 family. Monomer. Ca(2+) serves as cofactor.

It carries out the reaction Endohydrolysis of (1-&gt;4)-alpha-D-glucosidic linkages in polysaccharides containing three or more (1-&gt;4)-alpha-linked D-glucose units.. The sequence is that of Alpha-amylase (tam) from Thermomonospora curvata.